The chain runs to 316 residues: Acetyl-coenzyme A carboxylase carboxyl transferase subunit alpha (316 aa).

The CoA carboxyltransferase C-terminal domain maps to 39 to 293; the sequence is KLEEKNAQLT…KKHLQANLTN (255 aa).

The protein belongs to the AccA family. As to quaternary structure, acetyl-CoA carboxylase is a heterohexamer composed of biotin carboxyl carrier protein (AccB), biotin carboxylase (AccC) and two subunits each of ACCase subunit alpha (AccA) and ACCase subunit beta (AccD).

It localises to the cytoplasm. The catalysed reaction is N(6)-carboxybiotinyl-L-lysyl-[protein] + acetyl-CoA = N(6)-biotinyl-L-lysyl-[protein] + malonyl-CoA. Its pathway is lipid metabolism; malonyl-CoA biosynthesis; malonyl-CoA from acetyl-CoA: step 1/1. In terms of biological role, component of the acetyl coenzyme A carboxylase (ACC) complex. First, biotin carboxylase catalyzes the carboxylation of biotin on its carrier protein (BCCP) and then the CO(2) group is transferred by the carboxyltransferase to acetyl-CoA to form malonyl-CoA. This is Acetyl-coenzyme A carboxylase carboxyl transferase subunit alpha from Coxiella burnetii (strain RSA 331 / Henzerling II).